Here is a 330-residue protein sequence, read N- to C-terminus: Ketol-acid reductoisomerase (NADP(+)) (330 aa).

The KARI N-terminal Rossmann domain maps to 2–182; sequence IHVYYDKDAN…GCTKAGVIET (181 aa). NADP(+) is bound by residues 25 to 28, Arg-48, Ser-51, Ser-53, and 83 to 86; these read YGSQ and DEVQ. His-108 is a catalytic residue. NADP(+) is bound at residue Gly-134. The KARI C-terminal knotted domain occupies 183 to 328; sequence TFKEETETDL…KKLRDMMPWI (146 aa). 4 residues coordinate Mg(2+): Asp-191, Glu-195, Glu-227, and Glu-231. Residue Ser-252 coordinates substrate.

The protein belongs to the ketol-acid reductoisomerase family. Mg(2+) is required as a cofactor.

The catalysed reaction is (2R)-2,3-dihydroxy-3-methylbutanoate + NADP(+) = (2S)-2-acetolactate + NADPH + H(+). It carries out the reaction (2R,3R)-2,3-dihydroxy-3-methylpentanoate + NADP(+) = (S)-2-ethyl-2-hydroxy-3-oxobutanoate + NADPH + H(+). It participates in amino-acid biosynthesis; L-isoleucine biosynthesis; L-isoleucine from 2-oxobutanoate: step 2/4. Its pathway is amino-acid biosynthesis; L-valine biosynthesis; L-valine from pyruvate: step 2/4. Its function is as follows. Involved in the biosynthesis of branched-chain amino acids (BCAA). Catalyzes an alkyl-migration followed by a ketol-acid reduction of (S)-2-acetolactate (S2AL) to yield (R)-2,3-dihydroxy-isovalerate. In the isomerase reaction, S2AL is rearranged via a Mg-dependent methyl migration to produce 3-hydroxy-3-methyl-2-ketobutyrate (HMKB). In the reductase reaction, this 2-ketoacid undergoes a metal-dependent reduction by NADPH to yield (R)-2,3-dihydroxy-isovalerate. The sequence is that of Ketol-acid reductoisomerase (NADP(+)) from Halothermothrix orenii (strain H 168 / OCM 544 / DSM 9562).